Here is a 227-residue protein sequence, read N- to C-terminus: Lipoprotein-releasing system ATP-binding protein LolD (227 aa).

Residues 7 to 227 (LKLTGVERHY…TISDGKVVEF (221 aa)) enclose the ABC transporter domain. Residue 43–50 (APSGTGKS) coordinates ATP.

It belongs to the ABC transporter superfamily. Lipoprotein translocase (TC 3.A.1.125) family. As to quaternary structure, the complex is composed of two ATP-binding proteins (LolD) and two transmembrane proteins (LolC and LolE).

The protein resides in the cell inner membrane. Its function is as follows. Part of the ABC transporter complex LolCDE involved in the translocation of mature outer membrane-directed lipoproteins, from the inner membrane to the periplasmic chaperone, LolA. Responsible for the formation of the LolA-lipoprotein complex in an ATP-dependent manner. The chain is Lipoprotein-releasing system ATP-binding protein LolD from Rhizobium etli (strain ATCC 51251 / DSM 11541 / JCM 21823 / NBRC 15573 / CFN 42).